The sequence spans 307 residues: Formate hydrogenlyase subunit 4 (307 aa).

Topologically, residues 1-2 are periplasmic; the sequence is MS. The helical transmembrane segment at 3–23 threads the bilayer; it reads VLYPLIQALVLFAVAPLLSGI. Over 24–67 the chain is Cytoplasmic; the sequence is TRVARARLHNRRGPGVLQEYRDIIKLLGRQSVGPDASGWVFRLT. Residues 68 to 88 form a helical membrane-spanning segment; that stretch reads PYVMVGVMLTIATALPVVTVG. Residues 89-93 lie on the Periplasmic side of the membrane; that stretch reads SPLPQ. Residues 94–114 form a helical membrane-spanning segment; sequence LGDLITLLYLFAIARFFFAIS. Over 115–131 the chain is Cytoplasmic; the sequence is GLDTGSPFTAIGASREA. Residues 132–152 traverse the membrane as a helical segment; the sequence is MLGVLVEPMLLLGLWVAAQVA. Residues 153–167 are Periplasmic-facing; it reads GSTNISNITDTVYHW. The helical transmembrane segment at 168–188 threads the bilayer; the sequence is PLSQSIPLVLALCACAFATFI. Topologically, residues 189–221 are cytoplasmic; it reads EMGKLPFDLAEAEQELQEGPLSEYSGSGFGVMK. A helical transmembrane segment spans residues 222–242; it reads WGISLKQLVVLQMFVGVFIPW. Over 243–253 the chain is Periplasmic; that stretch reads GQMETFTAGGL. The helical transmembrane segment at 254–274 threads the bilayer; it reads LLALVIAIVKLVVGVLVIALF. Residues 275 to 284 lie on the Cytoplasmic side of the membrane; sequence ENSMARLRLD. A helical membrane pass occupies residues 285-305; the sequence is ITPRITWAGFGFAFLAFVSLL. Topologically, residues 306 to 307 are periplasmic; sequence AA.

It belongs to the complex I subunit 1 family. In terms of assembly, FHL comprises of a formate dehydrogenase, unidentified electron carriers and a hydrogenase (isoenzyme 3). In this non-energy conserving pathway molecular hydrogen and carbodioxide from formate are released.

It localises to the cell inner membrane. This Escherichia coli (strain K12) protein is Formate hydrogenlyase subunit 4 (hycD).